The following is a 68-amino-acid chain: ATP synthase F(0) complex subunit 8 (68 aa).

Residues Val-8–Thr-24 traverse the membrane as a helical segment. The residue at position 54 (Lys-54) is an N6-acetyllysine; alternate. Lys-54 bears the N6-succinyllysine; alternate mark. Lys-57 is modified (N6-acetyllysine).

The protein belongs to the ATPase protein 8 family. In terms of assembly, component of the ATP synthase complex composed at least of ATP5F1A/subunit alpha, ATP5F1B/subunit beta, ATP5MC1/subunit c (homooctomer), MT-ATP6/subunit a, MT-ATP8/subunit 8, ATP5ME/subunit e, ATP5MF/subunit f, ATP5MG/subunit g, ATP5MK/subunit k, ATP5MJ/subunit j, ATP5F1C/subunit gamma, ATP5F1D/subunit delta, ATP5F1E/subunit epsilon, ATP5PF/subunit F6, ATP5PB/subunit b, ATP5PD/subunit d, ATP5PO/subunit OSCP. ATP synthase complex consists of a soluble F(1) head domain (subunits alpha(3) and beta(3)) - the catalytic core - and a membrane F(0) domain - the membrane proton channel (subunits c, a, 8, e, f, g, k and j). These two domains are linked by a central stalk (subunits gamma, delta, and epsilon) rotating inside the F1 region and a stationary peripheral stalk (subunits F6, b, d, and OSCP). Interacts with PRICKLE3.

Its subcellular location is the mitochondrion membrane. Functionally, subunit 8, of the mitochondrial membrane ATP synthase complex (F(1)F(0) ATP synthase or Complex V) that produces ATP from ADP in the presence of a proton gradient across the membrane which is generated by electron transport complexes of the respiratory chain. ATP synthase complex consist of a soluble F(1) head domain - the catalytic core - and a membrane F(1) domain - the membrane proton channel. These two domains are linked by a central stalk rotating inside the F(1) region and a stationary peripheral stalk. During catalysis, ATP synthesis in the catalytic domain of F(1) is coupled via a rotary mechanism of the central stalk subunits to proton translocation. In vivo, can only synthesize ATP although its ATP hydrolase activity can be activated artificially in vitro. Part of the complex F(0) domain. The protein is ATP synthase F(0) complex subunit 8 of Gorilla gorilla gorilla (Western lowland gorilla).